Consider the following 226-residue polypeptide: ATP synthase F(0) complex subunit a (226 aa).

6 helical membrane-spanning segments follow: residues 9-29 (FITP…FPAM), 68-88 (WALM…LGLV), 97-117 (QLSM…ITGF), 138-158 (IPML…ALAI), 164-184 (ITAG…LTSI), and 201-223 (ILEF…LYLH).

It belongs to the ATPase A chain family. In terms of assembly, component of the ATP synthase complex composed at least of ATP5F1A/subunit alpha, ATP5F1B/subunit beta, ATP5MC1/subunit c (homooctomer), MT-ATP6/subunit a, MT-ATP8/subunit 8, ATP5ME/subunit e, ATP5MF/subunit f, ATP5MG/subunit g, ATP5MK/subunit k, ATP5MJ/subunit j, ATP5F1C/subunit gamma, ATP5F1D/subunit delta, ATP5F1E/subunit epsilon, ATP5PF/subunit F6, ATP5PB/subunit b, ATP5PD/subunit d, ATP5PO/subunit OSCP. ATP synthase complex consists of a soluble F(1) head domain (subunits alpha(3) and beta(3)) - the catalytic core - and a membrane F(0) domain - the membrane proton channel (subunits c, a, 8, e, f, g, k and j). These two domains are linked by a central stalk (subunits gamma, delta, and epsilon) rotating inside the F1 region and a stationary peripheral stalk (subunits F6, b, d, and OSCP). Interacts with DNAJC30; interaction is direct.

The protein resides in the mitochondrion inner membrane. The enzyme catalyses H(+)(in) = H(+)(out). Functionally, subunit a, of the mitochondrial membrane ATP synthase complex (F(1)F(0) ATP synthase or Complex V) that produces ATP from ADP in the presence of a proton gradient across the membrane which is generated by electron transport complexes of the respiratory chain. ATP synthase complex consist of a soluble F(1) head domain - the catalytic core - and a membrane F(1) domain - the membrane proton channel. These two domains are linked by a central stalk rotating inside the F(1) region and a stationary peripheral stalk. During catalysis, ATP synthesis in the catalytic domain of F(1) is coupled via a rotary mechanism of the central stalk subunits to proton translocation. With the subunit c (ATP5MC1), forms the proton-conducting channel in the F(0) domain, that contains two crucial half-channels (inlet and outlet) that facilitate proton movement from the mitochondrial intermembrane space (IMS) into the matrix. Protons are taken up via the inlet half-channel and released through the outlet half-channel, following a Grotthuss mechanism. This is ATP synthase F(0) complex subunit a from Dugong dugon (Dugong).